Consider the following 207-residue polypeptide: MADS-box protein AGL71 (207 aa).

One can recognise an MADS-box domain in the interval 1-61; it reads MVRGKIEIKK…GRLHEYSSSQ (61 aa). Positions 88-178 constitute a K-box domain; that stretch reads LQELKMEIDR…LEEVNMHHSS (91 aa).

It is found in the nucleus. In terms of biological role, MADS-box transcription factor that acts with AGL42 and AGL72 in the control of flowering time. Promotes flowering at the shoot apical and axillary meristems. Seems to act through a gibberellin-dependent pathway. Interacts genetically with SOC1 and its expression is directly regulated by SOC1. The polypeptide is MADS-box protein AGL71 (AGL71) (Arabidopsis thaliana (Mouse-ear cress)).